The following is a 306-amino-acid chain: Beta-lactamase 1 (306 aa).

Residues methionine 1–lysine 43 form the signal peptide. Serine 89 functions as the Acyl-ester intermediate in the catalytic mechanism. Glutamate 185 serves as the catalytic Proton acceptor. Lysine 251–glycine 253 contributes to the substrate binding site.

The protein belongs to the class-A beta-lactamase family.

The protein localises to the secreted. The enzyme catalyses a beta-lactam + H2O = a substituted beta-amino acid. Functionally, acts preferentially on penicillins. The protein is Beta-lactamase 1 (penPC) of Bacillus cereus.